The sequence spans 448 residues: tRNA-2-methylthio-N(6)-dimethylallyladenosine synthase (448 aa).

The MTTase N-terminal domain maps to 3–120; the sequence is KKLFIKTHGC…LPTMLDSRQG (118 aa). The [4Fe-4S] cluster site is built by Cys12, Cys49, Cys83, Cys158, Cys162, and Cys165. Residues 144-376 enclose the Radical SAM core domain; that stretch reads TSDGATAFVS…QERLNQQTMQ (233 aa). The 66-residue stretch at 379 to 444 folds into the TRAM domain; sequence RRMVGNTERI…PNSLRGDLAS (66 aa).

This sequence belongs to the methylthiotransferase family. MiaB subfamily. Monomer. Requires [4Fe-4S] cluster as cofactor.

Its subcellular location is the cytoplasm. The enzyme catalyses N(6)-dimethylallyladenosine(37) in tRNA + (sulfur carrier)-SH + AH2 + 2 S-adenosyl-L-methionine = 2-methylsulfanyl-N(6)-dimethylallyladenosine(37) in tRNA + (sulfur carrier)-H + 5'-deoxyadenosine + L-methionine + A + S-adenosyl-L-homocysteine + 2 H(+). In terms of biological role, catalyzes the methylthiolation of N6-(dimethylallyl)adenosine (i(6)A), leading to the formation of 2-methylthio-N6-(dimethylallyl)adenosine (ms(2)i(6)A) at position 37 in tRNAs that read codons beginning with uridine. The chain is tRNA-2-methylthio-N(6)-dimethylallyladenosine synthase from Chromohalobacter salexigens (strain ATCC BAA-138 / DSM 3043 / CIP 106854 / NCIMB 13768 / 1H11).